A 223-amino-acid polypeptide reads, in one-letter code: RNA-free ribonuclease P (223 aa).

Belongs to the HARP family.

The catalysed reaction is Endonucleolytic cleavage of RNA, removing 5'-extranucleotides from tRNA precursor.. In terms of biological role, RNA-free RNase P that catalyzes the removal of the 5'-leader sequence from pre-tRNA to produce the mature 5'-terminus. This Methanococcus maripaludis (strain C7 / ATCC BAA-1331) protein is RNA-free ribonuclease P.